Consider the following 100-residue polypeptide: Putative antiporter subunit mnhF2 (100 aa).

The next 3 membrane-spanning stretches (helical) occupy residues 5–25 (ITHI…IICL), 38–60 (VVTF…VLMG), and 70–92 (LIAI…GHVF).

The protein belongs to the CPA3 antiporters (TC 2.A.63) subunit F family. As to quaternary structure, may form a heterooligomeric complex that consists of seven subunits: mnhA2, mnhB2, mnhC2, mnhD2, mnhE2, mnhF2 and mnhG2.

Its subcellular location is the cell membrane. The protein is Putative antiporter subunit mnhF2 (mnhF2) of Staphylococcus aureus (strain USA300).